The following is a 366-amino-acid chain: Chorismate synthase (366 aa).

The NADP(+) site is built by Arg-48 and Arg-54. FMN-binding positions include 125–127 (RSS), 238–239 (NA), Gly-278, 293–297 (KPTSS), and Arg-319.

Belongs to the chorismate synthase family. In terms of assembly, homotetramer. The cofactor is FMNH2.

It carries out the reaction 5-O-(1-carboxyvinyl)-3-phosphoshikimate = chorismate + phosphate. It functions in the pathway metabolic intermediate biosynthesis; chorismate biosynthesis; chorismate from D-erythrose 4-phosphate and phosphoenolpyruvate: step 7/7. Functionally, catalyzes the anti-1,4-elimination of the C-3 phosphate and the C-6 proR hydrogen from 5-enolpyruvylshikimate-3-phosphate (EPSP) to yield chorismate, which is the branch point compound that serves as the starting substrate for the three terminal pathways of aromatic amino acid biosynthesis. This reaction introduces a second double bond into the aromatic ring system. In Burkholderia vietnamiensis (strain G4 / LMG 22486) (Burkholderia cepacia (strain R1808)), this protein is Chorismate synthase.